Reading from the N-terminus, the 1035-residue chain is DNA polymerase I B, mitochondrial (1035 aa).

A mitochondrion-targeting transit peptide spans 1 to 42 (MAVAPPLPPAPARLLRRWQGSSPWLSSSFGRTRYFSRPAFAA). The interval 100–124 (TNGTTPLRVGNLRHDPSEDIRSSNY) is disordered. Residues 111–120 (LRHDPSEDIR) are compositionally biased toward basic and acidic residues. Residues 317–478 (FGNGKTCIWV…LYESLKNKLE (162 aa)) enclose the 3'-5' exonuclease domain. Positions 699-1032 (HAIAALCEVF…VDAKYAKSWY (334 aa)) are polymerase.

It belongs to the DNA polymerase type-A family.

The protein localises to the mitochondrion. It catalyses the reaction DNA(n) + a 2'-deoxyribonucleoside 5'-triphosphate = DNA(n+1) + diphosphate. Its activity is regulated as follows. Not inhibited by aphidicolin. In addition to polymerase activity, this DNA polymerase exhibits 5'-3' exonuclease activity. May be required for DNA replication and accumulation in mitochondria. The protein is DNA polymerase I B, mitochondrial of Oryza sativa subsp. japonica (Rice).